A 159-amino-acid chain; its full sequence is NADH-quinone oxidoreductase subunit B (159 aa).

Residues Cys32, Cys33, Cys97, and Cys126 each coordinate [4Fe-4S] cluster.

Belongs to the complex I 20 kDa subunit family. In terms of assembly, NDH-1 is composed of 14 different subunits. Subunits NuoB, C, D, E, F, and G constitute the peripheral sector of the complex. It depends on [4Fe-4S] cluster as a cofactor.

Its subcellular location is the cell inner membrane. The catalysed reaction is a quinone + NADH + 5 H(+)(in) = a quinol + NAD(+) + 4 H(+)(out). Its function is as follows. NDH-1 shuttles electrons from NADH, via FMN and iron-sulfur (Fe-S) centers, to quinones in the respiratory chain. The immediate electron acceptor for the enzyme in this species is believed to be ubiquinone. Couples the redox reaction to proton translocation (for every two electrons transferred, four hydrogen ions are translocated across the cytoplasmic membrane), and thus conserves the redox energy in a proton gradient. This is NADH-quinone oxidoreductase subunit B from Helicobacter acinonychis (strain Sheeba).